The sequence spans 377 residues: Glutamate 5-kinase (377 aa).

K22 contributes to the ATP binding site. Positions 62, 149, and 161 each coordinate substrate. Residues 181–182 and 223–229 contribute to the ATP site; these read TD and TGGMVTK. Residues 285-363 form the PUA domain; it reads RGAIVVDAGA…AQLKRFLGPQ (79 aa).

It belongs to the glutamate 5-kinase family.

It localises to the cytoplasm. The enzyme catalyses L-glutamate + ATP = L-glutamyl 5-phosphate + ADP. The protein operates within amino-acid biosynthesis; L-proline biosynthesis; L-glutamate 5-semialdehyde from L-glutamate: step 1/2. In terms of biological role, catalyzes the transfer of a phosphate group to glutamate to form L-glutamate 5-phosphate. This chain is Glutamate 5-kinase, found in Bifidobacterium longum subsp. infantis (strain ATCC 15697 / DSM 20088 / JCM 1222 / NCTC 11817 / S12).